The chain runs to 142 residues: Large ribosomal subunit protein uL11 (142 aa).

This sequence belongs to the universal ribosomal protein uL11 family. As to quaternary structure, part of the ribosomal stalk of the 50S ribosomal subunit. Interacts with L10 and the large rRNA to form the base of the stalk. L10 forms an elongated spine to which L12 dimers bind in a sequential fashion forming a multimeric L10(L12)X complex. In terms of processing, one or more lysine residues are methylated.

Its function is as follows. Forms part of the ribosomal stalk which helps the ribosome interact with GTP-bound translation factors. The sequence is that of Large ribosomal subunit protein uL11 from Yersinia pestis bv. Antiqua (strain Angola).